The following is a 502-amino-acid chain: tRNA-specific adenosine deaminase 1 (502 aa).

An A to I editase domain is found at 63 to 501; sequence SMGTGTKCIG…IRNPPDYHQF (439 aa). Residue His87 participates in Zn(2+) binding. The active-site Proton donor is Glu89. The 1D-myo-inositol hexakisphosphate site is built by Arg93 and Arg94. Cys142 serves as a coordination point for Zn(2+). The interval 174–194 is disordered; it reads SSNLEAPGNERKCEDPDSPVT. At Ser191 the chain carries Phosphoserine. Cys299 provides a ligand contact to Zn(2+). Residues Lys302, Arg305, Lys435, and Lys470 each contribute to the 1D-myo-inositol hexakisphosphate site.

Belongs to the ADAT1 family. Requires 1D-myo-inositol hexakisphosphate as cofactor. As to expression, ubiquitously expressed.

It catalyses the reaction adenosine(37) in tRNA(Ala) + H2O + H(+) = inosine(37) in tRNA(Ala) + NH4(+). Its function is as follows. Specifically deaminates adenosine-37 to inosine in tRNA-Ala. The chain is tRNA-specific adenosine deaminase 1 (ADAT1) from Homo sapiens (Human).